A 167-amino-acid chain; its full sequence is Type IV major pilin protein PilE (167 aa).

A propeptide spans 1 to 7 (MNTLQKG) (leader sequence). N-methylphenylalanine is present on Phe-8. Residues 8–28 (FTLIELMIVIAIVGILAAVAL) traverse the membrane as a helical segment. O-linked (GlcNAc...) serine glycosylation occurs at Ser-70. Residues Cys-127 and Cys-160 are joined by a disulfide bond.

It belongs to the N-Me-Phe pilin family. In terms of assembly, the pili are polar flexible filaments of about 5.4 nanometers diameter and 2.5 micrometers average length; they consist of only a single polypeptide chain arranged in a helical configuration of five subunits per turn in the assembled pilus.

It localises to the fimbrium. It is found in the membrane. Functionally, major component of the type IV pilus (T4P) that plays a role in cellular adherence, microcolony formation, resistance to neutrophil mediated killing, twitching motility as well as transformation. Mediates the attachment and the formation of bacterial microcolonies on host epithelial cells. Mechanistically, pili retractation induces host NF-kappa-B activation in infected cells, which is temporally associated with the formation of gonococcal microcolonies. The polypeptide is Type IV major pilin protein PilE (pilE) (Neisseria gonorrhoeae).